Reading from the N-terminus, the 164-residue chain is MIITTSRKPSQRTRSLVNDLARVFNFKILNRGKIPLSELIENKDDMIIVEELKGNPGRLKIFNFENNKILSMNLSLKLQREVSGKAFKNSGKLGSKFDKNTEHLKEFFFEYLFKKLSNYKEENFEVVITFKTVDESTFYIEVHKGSENMGPSLKIKTVKILDIE.

A Brix domain is found at 1-164 (MIITTSRKPS…IKTVKILDIE (164 aa)).

Functionally, probably involved in the biogenesis of the ribosome. In Methanococcus maripaludis (strain DSM 14266 / JCM 13030 / NBRC 101832 / S2 / LL), this protein is Probable Brix domain-containing ribosomal biogenesis protein.